We begin with the raw amino-acid sequence, 460 residues long: UDP-glycosyltransferase 74B1 (460 aa).

The active-site Proton acceptor is H22. Residue H22 coordinates an anthocyanidin. The Charge relay role is filled by D113. T135, Q339, H354, W357, N358, S359, E362, D378, and Q379 together coordinate UDP-alpha-D-glucose.

Belongs to the UDP-glycosyltransferase family. Expressed in the vasculature, the apical meristems of roots, shoots and inflorescence, and the junction of organ or branches.

It catalyses the reaction (Z)-2-phenyl-1-thioacetohydroximate + UDP-alpha-D-glucose = (Z)-desulfoglucotropeolin + UDP. The enzyme catalyses a (Z)-omega-(methylsulfanyl)alkyl-thiohydroximate + UDP-alpha-D-glucose = an aliphatic (Z)-desulfo-glucosinolate + UDP. It carries out the reaction (Z)-2-(indol-3-yl)-1-thioacetohydroximate + UDP-alpha-D-glucose = (Z)-indolylmethyl desulfoglucosinolate + UDP. Involved in the biosynthesis of glucosinolate. In in vitro assay, may use phenylacetothiohydroximate (PATH), but not phenylacetic acid (PAA), indole-3-acetic acid (IAA) or salicylic acid (SA) as substrate. Specific for the thiohydroximate functional group and does not glucosylate the carboxylate group or a hydroxyl group. This is UDP-glycosyltransferase 74B1 (UGT74B1) from Arabidopsis thaliana (Mouse-ear cress).